A 317-amino-acid polypeptide reads, in one-letter code: Protein phosphatase PTC7 homolog fig (317 aa).

Residues 46-312 (PYLVTVVQGR…DDITLILASV (267 aa)) enclose the PPM-type phosphatase domain. 3 residues coordinate Mn(2+): Asp90, Gly91, and Asp235.

This sequence belongs to the PP2C family. Mg(2+) is required as a cofactor. Requires Mn(2+) as cofactor.

The enzyme catalyses O-phospho-L-seryl-[protein] + H2O = L-seryl-[protein] + phosphate. It carries out the reaction O-phospho-L-threonyl-[protein] + H2O = L-threonyl-[protein] + phosphate. This Drosophila erecta (Fruit fly) protein is Protein phosphatase PTC7 homolog fig.